The chain runs to 602 residues: Rho family-interacting cell polarization regulator 2 (602 aa).

Residues 46–73 form a disordered region; the sequence is KKPQAKVKKMHNLGHKNSTTPKEPQPKR. A compositionally biased stretch (basic residues) spans 48–59; sequence PQAKVKKMHNLG. Residues 83 to 112 adopt a coiled-coil conformation; that stretch reads NGLDEYLEVHQTELDKLTAQLKDMRRNSRL. Residues 173-421 are necessary for interaction with NCAM and myoblast protrusion formation; the sequence is RESLTEINRS…TTAATQHRAL (249 aa). The interval 384–474 is disordered; it reads GDLPYEDRVP…RSEVCQKPSN (91 aa). Residues 403 to 416 are compositionally biased toward polar residues; it reads AHVSSSPDITTAAT. The span at 423-437 shows a compositional bias: low complexity; that stretch reads SSESSSPDCSSSDSC.

This sequence belongs to the RIPOR family. In terms of assembly, homooligomer; homooligomerization is regulated by RHOC and leads to the formation of concatemers through the association of N- and C-termini. Interacts with NCAM.

It localises to the cytoplasm. The protein localises to the cytoskeleton. It is found in the cell projection. Its subcellular location is the filopodium. The protein resides in the apical cell membrane. It localises to the stereocilium. The protein localises to the stereocilium membrane. In terms of biological role, acts as an inhibitor of the small GTPase RHOA and plays several roles in the regulation of myoblast and hair cell differentiation, lymphocyte T proliferation and neutrophil polarization. Plays a role in fetal mononuclear myoblast differentiation by promoting filopodia and myotube formation. Maintains naive T lymphocytes in a quiescent state and prevents chemokine-induced T lymphocyte responses, such as cell adhesion, polarization and migration. Involved also in the regulation of neutrophil polarization, chemotaxis and adhesion. Required for normal development of inner and outer hair cell stereocilia within the cochlea of the inner ear. Plays a role for maintaining the structural organization of the basal domain of stereocilia. Involved in mechanosensory hair cell function. Required for normal hearing. The polypeptide is Rho family-interacting cell polarization regulator 2 (Gallus gallus (Chicken)).